Consider the following 325-residue polypeptide: Large ribosomal subunit protein uL4m (325 aa).

The tract at residues 113–158 (ASTKTRYEVHGSHKKMSPQKGTGNARRGTRQSPLMKGGGKTFGPKP) is disordered.

Belongs to the universal ribosomal protein uL4 family. As to quaternary structure, component of the mitochondrial large ribosomal subunit (mt-LSU). Mature N.crassa 74S mitochondrial ribosomes consist of a small (37S) and a large (54S) subunit. The 37S small subunit contains a 16S ribosomal RNA (16S mt-rRNA) and 32 different proteins. The 54S large subunit contains a 23S rRNA (23S mt-rRNA) and 42 different proteins.

The protein resides in the mitochondrion. In terms of biological role, component of the mitochondrial ribosome (mitoribosome), a dedicated translation machinery responsible for the synthesis of mitochondrial genome-encoded proteins, including at least some of the essential transmembrane subunits of the mitochondrial respiratory chain. The mitoribosomes are attached to the mitochondrial inner membrane and translation products are cotranslationally integrated into the membrane. The sequence is that of Large ribosomal subunit protein uL4m (yml6) from Neurospora crassa (strain ATCC 24698 / 74-OR23-1A / CBS 708.71 / DSM 1257 / FGSC 987).